Reading from the N-terminus, the 651-residue chain is Protein cueball (651 aa).

Positions 1–21 (MILRLFILLSIITVYLQLSVG) are cleaved as a signal peptide. Over 22 to 540 (IQQQFEFAIT…VCLAPNAWTG (519 aa)) the chain is Extracellular. N77, N102, and N114 each carry an N-linked (GlcNAc...) asparagine glycan. 3 LDL-receptor class B repeats span residues 115–162 (RTIY…DICG), 163–207 (RKLY…DQGA), and 208–253 (KRIF…TRNA). Residue N183 is glycosylated (N-linked (GlcNAc...) asparagine). Residues 290 to 311 (VEGEEGTGAMDDNDIWPVGDFE) are disordered. A glycan (N-linked (GlcNAc...) asparagine) is linked at N324. 3 EGF-like domains span residues 374–408 (QLDE…TRCE), 409–440 (TNEC…YSGE), and 443–480 (EVKK…LRCE). Disulfide bonds link C383–C396, C398–C407, C412–C421, C416–C431, C447–C457, C451–C468, and C470–C479. N-linked (GlcNAc...) asparagine glycans are attached at residues N482 and N499. A helical transmembrane segment spans residues 541-561 (SVLMPLMISLILILLLLTIFI). The Cytoplasmic segment spans residues 562 to 651 (HGLRRLYKPK…LIHNMEDDLY (90 aa)).

It belongs to the cueball family.

It is found in the cell membrane. Its function is as follows. Has a role in spermatogenesis and oogenesis. The polypeptide is Protein cueball (Drosophila willistoni (Fruit fly)).